The sequence spans 1113 residues: Histone deacetylase 5 (1113 aa).

The segment at 1 to 22 is disordered; sequence MNSPNESDGMSGREPSLGILPR. K35 is covalently cross-linked (Glycyl lysine isopeptide (Lys-Gly) (interchain with G-Cter in SUMO2)). Disordered stretches follow at residues 39-63 and 187-272; these read PGAMPSSMGGGGGGSPSPVELRGAL and KEPT…SSPL. Positions 238–249 are enriched in basic and acidic residues; sequence DSRDDFPLRKTA. The residue at position 250 (S250) is a Phosphoserine; by AMPK, CaMK1, SIK1 and PKD/PRKD1. The span at 263-272 shows a compositional bias: basic and acidic residues; sequence KVAERRSSPL. T283 is subject to Phosphothreonine; by PKC. Positions 472–494 are disordered; it reads RTVGKLPRHRPLSRTQSSPLPQS. Low complexity predominate over residues 484–494; the sequence is SRTQSSPLPQS. S488 carries the post-translational modification Phosphoserine; by AMPK, CaMK1, SIK1 and PKD/PRKD1. K523 bears the N6-acetyllysine mark. The interval 526–611 is disordered; that stretch reads TKTGELSRQP…PDEGPDLEES (86 aa). A compositionally biased stretch (acidic residues) spans 571-610; that stretch reads STQEDLEEEEEEEEEEEEDCIQVKDEDGESGPDEGPDLEE. Phosphoserine is present on residues S600 and S650. The segment at 675–1019 is histone deacetylase; that stretch reads GVVYDTFMLK…VSALLSVELQ (345 aa). C687, C689, H695, and C772 together coordinate Zn(2+). Residue H824 is part of the active site. The Nuclear export signal motif lies at 1072–1113; sequence EEAETVSAMALLSVGAEQAQAVATQEHSPRPAEEPMEQEPAL. Residues 1088–1113 form a disordered region; sequence EQAQAVATQEHSPRPAEEPMEQEPAL. S1099 carries the post-translational modification Phosphoserine.

This sequence belongs to the histone deacetylase family. HD type 2 subfamily. In terms of assembly, interacts with AHRR, BAHD1, BCOR, HDAC7, HDAC9, CTBP1, MEF2C, NCOR2, NRIP1, PHB2 and a 14-3-3 chaperone protein. Interacts with BCL6, DDIT3/CHOP, GRK5, KDM5B and MYOCD. Interacts with EP300 in the presence of TFAP2C. Interacts with ANKRA2. Interacts with CUL7 (as part of the 3M complex); negatively regulated by ANKRA2. Interacts with ZBTB7B; the interaction allows the recruitment of HDAC4 on CD8 loci for deacetylation and possible inhibition of CD8 genes expression. Interacts with RARA. Phosphorylated by AMPK, CaMK1, SIK1 and PRKD1 at Ser-250 and Ser-488. The phosphorylation is required for the export to the cytoplasm and inhibition. Phosphorylated by the PKC kinases PKN1 and PKN2, impairing nuclear import. Phosphorylated by GRK5, leading to nuclear export of HDAC5 and allowing MEF2-mediated transcription. In terms of processing, ubiquitinated. Polyubiquitination however does not lead to its degradation.

The protein resides in the nucleus. It localises to the cytoplasm. The enzyme catalyses N(6)-acetyl-L-lysyl-[histone] + H2O = L-lysyl-[histone] + acetate. Responsible for the deacetylation of lysine residues on the N-terminal part of the core histones (H2A, H2B, H3 and H4). Histone deacetylation gives a tag for epigenetic repression and plays an important role in transcriptional regulation, cell cycle progression and developmental events. Histone deacetylases act via the formation of large multiprotein complexes. Involved in muscle maturation by repressing transcription of myocyte enhancer MEF2C. During muscle differentiation, it shuttles into the cytoplasm, allowing the expression of myocyte enhancer factors. Serves as a corepressor of RARA and causes its deacetylation. In association with RARA, plays a role in the repression of microRNA-10a and thereby in the inflammatory response. The polypeptide is Histone deacetylase 5 (Hdac5) (Mus musculus (Mouse)).